Here is an 851-residue protein sequence, read N- to C-terminus: Receptor like protein kinase S.2 (851 aa).

Positions 117–436 (FSDELILGSG…LPSFKSHPLY (320 aa)) constitute a Protein kinase 1 domain. ATP contacts are provided by residues 123–131 (LGSGGFGRV) and lysine 146. The Proton acceptor role is filled by aspartate 248. The segment at 448–471 (SATTTTTRTTMTTTTSTTSFNASS) is disordered. In terms of domain architecture, Protein kinase 2 spans 532-819 (FSDARRVAEV…SILDGSERFF (288 aa)). Residues 538–546 (VAEVDFGTA) and lysine 560 each bind ATP.

It belongs to the protein kinase superfamily. Ser/Thr protein kinase family.

The catalysed reaction is L-seryl-[protein] + ATP = O-phospho-L-seryl-[protein] + ADP + H(+). It catalyses the reaction L-threonyl-[protein] + ATP = O-phospho-L-threonyl-[protein] + ADP + H(+). This Arabidopsis thaliana (Mouse-ear cress) protein is Receptor like protein kinase S.2 (LECRKS2).